We begin with the raw amino-acid sequence, 398 residues long: Phosphoglycerate kinase (398 aa).

Substrate-binding positions include 23-25, Arg-38, 61-64, Arg-120, and Arg-153; these read DLN and HFGR. Residues Lys-203, Glu-325, and 355–358 each bind ATP; that span reads GGDT.

It belongs to the phosphoglycerate kinase family. Monomer.

The protein resides in the cytoplasm. The enzyme catalyses (2R)-3-phosphoglycerate + ATP = (2R)-3-phospho-glyceroyl phosphate + ADP. Its pathway is carbohydrate degradation; glycolysis; pyruvate from D-glyceraldehyde 3-phosphate: step 2/5. The protein is Phosphoglycerate kinase of Chelativorans sp. (strain BNC1).